Here is a 242-residue protein sequence, read N- to C-terminus: Uridylate kinase (242 aa).

Lysine 16–glycine 19 lines the ATP pocket. Position 58 (glycine 58) interacts with UMP. ATP-binding residues include glycine 59 and arginine 63. Residues aspartate 78 and threonine 139 to threonine 146 each bind UMP. The ATP site is built by threonine 166, glutamine 167, tyrosine 172, and aspartate 175.

It belongs to the UMP kinase family. In terms of assembly, homohexamer.

It is found in the cytoplasm. It catalyses the reaction UMP + ATP = UDP + ADP. The protein operates within pyrimidine metabolism; CTP biosynthesis via de novo pathway; UDP from UMP (UMPK route): step 1/1. Its activity is regulated as follows. Inhibited by UTP. In terms of biological role, catalyzes the reversible phosphorylation of UMP to UDP. The protein is Uridylate kinase of Rickettsia canadensis (strain McKiel).